The chain runs to 512 residues: 2-isopropylmalate synthase (512 aa).

The region spanning 4–266 is the Pyruvate carboxyltransferase domain; the sequence is IEIFDTTLRD…TTKLNLKEIA (263 aa). Asp13, His201, His203, and Asn237 together coordinate Mn(2+). A regulatory domain region spans residues 390–512; that stretch reads QLESVQLAYG…GEPTPVSATI (123 aa).

This sequence belongs to the alpha-IPM synthase/homocitrate synthase family. LeuA type 1 subfamily. In terms of assembly, homodimer. The cofactor is Mn(2+).

The protein localises to the cytoplasm. The catalysed reaction is 3-methyl-2-oxobutanoate + acetyl-CoA + H2O = (2S)-2-isopropylmalate + CoA + H(+). It participates in amino-acid biosynthesis; L-leucine biosynthesis; L-leucine from 3-methyl-2-oxobutanoate: step 1/4. In terms of biological role, catalyzes the condensation of the acetyl group of acetyl-CoA with 3-methyl-2-oxobutanoate (2-ketoisovalerate) to form 3-carboxy-3-hydroxy-4-methylpentanoate (2-isopropylmalate). This Brevibacillus brevis (strain 47 / JCM 6285 / NBRC 100599) protein is 2-isopropylmalate synthase.